The following is a 248-amino-acid chain: Ribosomal RNA small subunit methyltransferase J (248 aa).

S-adenosyl-L-methionine is bound by residues 98–99, 114–115, 150–151, and Asp-168; these read RD, ER, and SS.

It belongs to the methyltransferase superfamily. RsmJ family.

The protein resides in the cytoplasm. It carries out the reaction guanosine(1516) in 16S rRNA + S-adenosyl-L-methionine = N(2)-methylguanosine(1516) in 16S rRNA + S-adenosyl-L-homocysteine + H(+). Its function is as follows. Specifically methylates the guanosine in position 1516 of 16S rRNA. This Shewanella amazonensis (strain ATCC BAA-1098 / SB2B) protein is Ribosomal RNA small subunit methyltransferase J.